Reading from the N-terminus, the 218-residue chain is MLSLQCLPPFFISVPNRSTNSCSTAPLRAVSDFAASPSTSISRRLILLRHAHSSWDDLSLRDHDRPLSKTGEADAAKVAQILSSLGWLPQLILSSDATRTRETLKSMQAQVDGFMEANVHFIPSFYSIAAMDGQTAEHLQNIISKYSTPDISTIMCMGHNKGWEEAASMLSGASIKLKTCNAALLQAFGNSWEEAFALSGPGGWKLEGLVAPDSSIFV.

The N-terminal 28 residues, Met1–Arg28, are a transit peptide targeting the chloroplast.

Belongs to the SixA phosphatase family.

It localises to the plastid. Its subcellular location is the chloroplast. This is an uncharacterized protein from Arabidopsis thaliana (Mouse-ear cress).